We begin with the raw amino-acid sequence, 243 residues long: 2-C-methyl-D-erythritol 4-phosphate cytidylyltransferase (243 aa).

The protein belongs to the IspD/TarI cytidylyltransferase family. IspD subfamily.

The catalysed reaction is 2-C-methyl-D-erythritol 4-phosphate + CTP + H(+) = 4-CDP-2-C-methyl-D-erythritol + diphosphate. It functions in the pathway isoprenoid biosynthesis; isopentenyl diphosphate biosynthesis via DXP pathway; isopentenyl diphosphate from 1-deoxy-D-xylulose 5-phosphate: step 2/6. Its function is as follows. Catalyzes the formation of 4-diphosphocytidyl-2-C-methyl-D-erythritol from CTP and 2-C-methyl-D-erythritol 4-phosphate (MEP). The chain is 2-C-methyl-D-erythritol 4-phosphate cytidylyltransferase from Pelodictyon phaeoclathratiforme (strain DSM 5477 / BU-1).